We begin with the raw amino-acid sequence, 190 residues long: Nucleoside triphosphate pyrophosphatase (190 aa).

Residue Asp69 is the Proton acceptor of the active site.

It belongs to the Maf family. A divalent metal cation serves as cofactor.

Its subcellular location is the cytoplasm. It catalyses the reaction a ribonucleoside 5'-triphosphate + H2O = a ribonucleoside 5'-phosphate + diphosphate + H(+). It carries out the reaction a 2'-deoxyribonucleoside 5'-triphosphate + H2O = a 2'-deoxyribonucleoside 5'-phosphate + diphosphate + H(+). In terms of biological role, nucleoside triphosphate pyrophosphatase. May have a dual role in cell division arrest and in preventing the incorporation of modified nucleotides into cellular nucleic acids. The polypeptide is Nucleoside triphosphate pyrophosphatase (Helicobacter pylori (strain ATCC 700392 / 26695) (Campylobacter pylori)).